A 200-amino-acid chain; its full sequence is MVKIVLASGSPRRSELLKQIGLDFEIVLSDIDESNEENLKANELVQHLAYKKAYDVAKKVANRENGKERYLVVGADTVVVKDRIMGKPKDRDDAVRMLKHLSGSWHEVMTGIALIDTKDFRSVTSVEITKVKMKELTDDTILAYVDTKEPMDKAGAYGIQEKGAILVERIEGCYFNVVGLPLGRLSDLLKDFGVSVLKKI.

The Proton acceptor role is filled by aspartate 76.

Belongs to the Maf family. YhdE subfamily. A divalent metal cation serves as cofactor.

It is found in the cytoplasm. The catalysed reaction is dTTP + H2O = dTMP + diphosphate + H(+). It carries out the reaction UTP + H2O = UMP + diphosphate + H(+). Functionally, nucleoside triphosphate pyrophosphatase that hydrolyzes dTTP and UTP. May have a dual role in cell division arrest and in preventing the incorporation of modified nucleotides into cellular nucleic acids. The polypeptide is dTTP/UTP pyrophosphatase (Acetivibrio thermocellus (strain ATCC 27405 / DSM 1237 / JCM 9322 / NBRC 103400 / NCIMB 10682 / NRRL B-4536 / VPI 7372) (Clostridium thermocellum)).